Consider the following 1032-residue polypeptide: GPI inositol-deacylase (1032 aa).

Asn12 carries N-linked (GlcNAc...) asparagine glycosylation. Residues 15 to 35 (ILTLVSFFGLVLFYLTWYLYT) form a helical membrane-spanning segment. Ser195 is an active-site residue. Residues Asn520 and Asn555 are each glycosylated (N-linked (GlcNAc...) asparagine). 2 helical membrane passes run 703-723 (LATI…QVKH) and 740-760 (ICSP…TPIM). An N-linked (GlcNAc...) asparagine glycan is attached at Asn784. The next 3 helical transmembrane spans lie at 805–825 (LWFI…LTFY), 861–880 (WANR…PIYM), and 884–903 (FAYV…ILVA). Asn907 carries N-linked (GlcNAc...) asparagine glycosylation. The helical transmembrane segment at 916-936 (SLLMLMLWVLPINVPILVVFV) threads the bilayer. Residues Asn938 and Asn942 are each glycosylated (N-linked (GlcNAc...) asparagine). Transmembrane regions (helical) follow at residues 943–963 (WTTP…ILLM) and 985–1005 (AFLA…TYWI).

Belongs to the GPI inositol-deacylase family.

The protein localises to the endoplasmic reticulum membrane. Functionally, involved in inositol deacylation of GPI-anchored proteins which plays important roles in the quality control and ER-associated degradation of GPI-anchored proteins. The protein is GPI inositol-deacylase (BST1) of Debaryomyces hansenii (strain ATCC 36239 / CBS 767 / BCRC 21394 / JCM 1990 / NBRC 0083 / IGC 2968) (Yeast).